Here is a 2286-residue protein sequence, read N- to C-terminus: Unconventional myosin-IXAb (2286 aa).

The region spanning 16-114 is the Ras-associating domain; the sequence is SEFTLRVYPG…YRFLLREKNL (99 aa). The 824-residue stretch at 148 to 971 folds into the Myosin motor domain; that stretch reads AQFVADLCSL…LRQRLQDELH (824 aa). Residues 178–198 form a helical membrane-spanning segment; that stretch reads IYTYVGSILIAVNPFKFLPIY. Residue 242-249 coordinates ATP; the sequence is GESGSGKT. The segment at 853-875 is actin-binding; it reads LNKLMETLGQSEPYFVKCIRSNA. IQ domains follow at residues 976–996, 1025–1054, 1066–1095, and 1089–1118; these read RRIV…HFCR, QQGA…AVLI, RNTA…AAVT, and QRRA…QQCR. The neck or regulatory domain stretch occupies residues 976–1113; the sequence is RRIVCLQRSF…QSRQRCRILR (138 aa). The tail stretch occupies residues 1114 to 2254; it reads EQQCREQSKH…PRANRSCPPK (1141 aa). Disordered regions lie at residues 1118–1279, 1308–1341, 1455–1588, and 1732–1754; these read REQS…QIRE, DVPL…FSVS, CEED…EPML, and DGTI…SDTV. Residues 1123–1133 show a composition bias toward polar residues; it reads HPSTVTKSLHQ. Residues 1134–1149 are compositionally biased toward basic and acidic residues; that stretch reads NTEEAEKLEEVWEKQT. Over residues 1263 to 1273 the composition is skewed to polar residues; sequence PINSAPQTPNR. Over residues 1455–1465 the composition is skewed to acidic residues; that stretch reads CEEDEDDEYED. Residues 1485–1501 are compositionally biased toward basic and acidic residues; sequence CVFHSDSEMSSQKEQKR. Residues 1529-1542 are compositionally biased toward basic residues; that stretch reads RGKMRFWSKSKHGD. Basic and acidic residues-rich tracts occupy residues 1550–1562 and 1572–1585; these read RSAD…RRND and GVSE…ENRE. Residues 1759–1808 form a Phorbol-ester/DAG-type zinc finger; sequence GHIFKSTQYSIPTYCEFCSSLIWMMDKACVCKLCRYACHKKCCLRMTTKC. Residues 1823–2011 enclose the Rho-GAP domain; the sequence is VELSRLTSDE…LIICEQMRKY (189 aa). Positions 2032-2049 are enriched in basic residues; that stretch reads LTHIRRSMGKSRARKSGH. 2 disordered regions span residues 2032–2087 and 2113–2286; these read LTHI…QQEE and PRAS…EFMV. A coiled-coil region spans residues 2080–2107; sequence QAAMQQEEKVLTQQIENLQKEKEELTYE. Composition is skewed to low complexity over residues 2176–2192 and 2200–2211; these read SLDS…SVSS and SSSSGPLFSSSS. Polar residues predominate over residues 2226–2238; it reads EQASLSARCASSS. The segment covering 2254–2270 has biased composition (basic and acidic residues); that stretch reads KPREPGDTGGRRREHEF.

This sequence belongs to the TRAFAC class myosin-kinesin ATPase superfamily. Myosin family.

It is found in the membrane. It localises to the cytoplasm. The protein localises to the synapse. Its subcellular location is the cell projection. The protein resides in the growth cone. Functionally, myosins are actin-based motor molecules with ATPase activity. Unconventional myosins serve in intracellular movements. Regulates Rho by stimulating it's GTPase activity in neurons. Required for the regulation of neurite branching and motor neuron axon guidance. The polypeptide is Unconventional myosin-IXAb (myo9ab) (Danio rerio (Zebrafish)).